The following is an 84-amino-acid chain: MPRDTIQYSEKYYDDKFEYRHVILPPDVAKEIPKNRLLSEGEWRGLGVQQSQGWVHYALHRPEPHILLFRREVPMPAASLSHNP.

It belongs to the CKS family. Monomer in solution; may form a homohexamer that can probably bind six kinase subunits.

In terms of biological role, binds to the catalytic subunit of the cyclin dependent kinases and is essential for their biological function. The chain is Probable cyclin-dependent kinases regulatory subunit from Physarum polycephalum (Slime mold).